The primary structure comprises 189 residues: Early E3 20.5 kDa glycoprotein (189 aa).

N-linked (GlcNAc...) asparagine; by host glycans are attached at residues asparagine 73 and asparagine 137.

The protein belongs to the adenoviridae E3_20 family.

Its function is as follows. E3 proteins seem to be dispensable for virus growth in tissue culture cells. They are potentially important for virus growth under special conditions; E3 region may help adenoviruses to evade the immune surveillance of the host. The chain is Early E3 20.5 kDa glycoprotein from Human adenovirus B serotype 3 (HAdV-3).